The sequence spans 944 residues: Isoleucine--tRNA ligase (944 aa).

The 'HIGH' region signature appears at 58–68 (PYANGQIHIGH). L-isoleucyl-5'-AMP is bound at residue Glu568. Residues 609 to 613 (KMSKS) carry the 'KMSKS' region motif. Lys612 is an ATP binding site. Cys907, Cys910, Cys927, and Cys930 together coordinate Zn(2+).

Belongs to the class-I aminoacyl-tRNA synthetase family. IleS type 1 subfamily. Monomer. Zn(2+) serves as cofactor.

It localises to the cytoplasm. It carries out the reaction tRNA(Ile) + L-isoleucine + ATP = L-isoleucyl-tRNA(Ile) + AMP + diphosphate. Its function is as follows. Catalyzes the attachment of isoleucine to tRNA(Ile). As IleRS can inadvertently accommodate and process structurally similar amino acids such as valine, to avoid such errors it has two additional distinct tRNA(Ile)-dependent editing activities. One activity is designated as 'pretransfer' editing and involves the hydrolysis of activated Val-AMP. The other activity is designated 'posttransfer' editing and involves deacylation of mischarged Val-tRNA(Ile). The chain is Isoleucine--tRNA ligase from Idiomarina loihiensis (strain ATCC BAA-735 / DSM 15497 / L2-TR).